Consider the following 264-residue polypeptide: Thiazole synthase (264 aa).

Residue K106 is the Schiff-base intermediate with DXP of the active site. Residues G167, 193-194 (AG), and 215-216 (NT) each bind 1-deoxy-D-xylulose 5-phosphate.

This sequence belongs to the ThiG family. In terms of assembly, homotetramer. Forms heterodimers with either ThiH or ThiS.

The protein resides in the cytoplasm. It carries out the reaction [ThiS sulfur-carrier protein]-C-terminal-Gly-aminoethanethioate + 2-iminoacetate + 1-deoxy-D-xylulose 5-phosphate = [ThiS sulfur-carrier protein]-C-terminal Gly-Gly + 2-[(2R,5Z)-2-carboxy-4-methylthiazol-5(2H)-ylidene]ethyl phosphate + 2 H2O + H(+). It participates in cofactor biosynthesis; thiamine diphosphate biosynthesis. In terms of biological role, catalyzes the rearrangement of 1-deoxy-D-xylulose 5-phosphate (DXP) to produce the thiazole phosphate moiety of thiamine. Sulfur is provided by the thiocarboxylate moiety of the carrier protein ThiS. In vitro, sulfur can be provided by H(2)S. In Xylella fastidiosa (strain Temecula1 / ATCC 700964), this protein is Thiazole synthase.